A 437-amino-acid chain; its full sequence is Kynureninase (437 aa).

Residues leucine 99, threonine 100, 127–130 (FPSD), serine 183, aspartate 212, histidine 215, and tyrosine 237 contribute to the pyridoxal 5'-phosphate site. Position 238 is an N6-(pyridoxal phosphate)lysine (lysine 238). Tryptophan 267 and asparagine 295 together coordinate pyridoxal 5'-phosphate.

It belongs to the kynureninase family. Homodimer. Pyridoxal 5'-phosphate is required as a cofactor.

Its subcellular location is the cytoplasm. The enzyme catalyses L-kynurenine + H2O = anthranilate + L-alanine + H(+). It catalyses the reaction 3-hydroxy-L-kynurenine + H2O = 3-hydroxyanthranilate + L-alanine + H(+). It functions in the pathway amino-acid degradation; L-kynurenine degradation; L-alanine and anthranilate from L-kynurenine: step 1/1. The protein operates within cofactor biosynthesis; NAD(+) biosynthesis; quinolinate from L-kynurenine: step 2/3. Its function is as follows. Catalyzes the cleavage of L-kynurenine (L-Kyn) and L-3-hydroxykynurenine (L-3OHKyn) into anthranilic acid (AA) and 3-hydroxyanthranilic acid (3-OHAA), respectively. The sequence is that of Kynureninase from Yarrowia lipolytica (strain CLIB 122 / E 150) (Yeast).